The sequence spans 761 residues: uncharacterized protein (761 aa).

TPR repeat units follow at residues 35–68 (EEGKILLGIYHFLSGEPQKAEELLSQVSENSLNS), 69–102 (AQGLSDLGLLYFFLGRVEDAERVLKKALKFSDVD), 103–136 (DALYARLGALYYSQGKLEEAQHYWERALSLNPNK), 137–170 (VEILYNLGVLHLNKGELEKALDLFERALRLKPDF), 172–203 (EAEEKKTLILLSLNRIDELVEEYYRELEKNPN), 204–237 (EEVYIKLGNTLYTAGRLAEARAVFQEGAEKFPHD), 351–384 (LGVLQELVHVLTSIGELEEAKEIQSQIVAINPSA), and 419–452 (ASAGFVLHKVLEKRKDYDKAFEVLIKANELVKEE). The tract at residues 487 to 761 (KRPIFVLGMP…PKGLVGYTVG (275 aa)) is protein sulfotransferase-like.

It in the C-terminal section; belongs to the protein sulfotransferase family.

This is an uncharacterized protein from Aquifex aeolicus (strain VF5).